Reading from the N-terminus, the 130-residue chain is MPGKTAQKGGRPSGKGKKKKQTLKFTIDCTLPVEDGIMDASNFEQFLQERIKVNGKTKNLTTNIVIERKKSKVTVTSEIAFSKRYLKYLTKKYLKKNNLRDWLRVVAANKESYELRYFQINQDDEEEEDD.

Residues 1–21 (MPGKTAQKGGRPSGKGKKKKQ) are disordered. Residues 17–20 (KKKK) carry the Nuclear localization signal motif.

This sequence belongs to the eukaryotic ribosomal protein eL22 family.

This is Large ribosomal subunit protein eL22 (RPL22) from Tripneustes gratilla (Hawaian sea urchin).